Here is a 239-residue protein sequence, read N- to C-terminus: Fatty acid metabolism regulator protein (239 aa).

One can recognise an HTH gntR-type domain in the interval 6-74 (QSPAGFAEEY…HGKPTKVNNF (69 aa)). Residues 34–53 (ERELSELIGVTRTTLREVLQ) constitute a DNA-binding region (H-T-H motif).

Homodimer.

It localises to the cytoplasm. Multifunctional regulator of fatty acid metabolism. This Escherichia fergusonii (strain ATCC 35469 / DSM 13698 / CCUG 18766 / IAM 14443 / JCM 21226 / LMG 7866 / NBRC 102419 / NCTC 12128 / CDC 0568-73) protein is Fatty acid metabolism regulator protein.